A 251-amino-acid polypeptide reads, in one-letter code: Imidazole glycerol phosphate synthase subunit HisF (251 aa).

Active-site residues include Asp12 and Asp131.

This sequence belongs to the HisA/HisF family. Heterodimer of HisH and HisF.

The protein localises to the cytoplasm. It carries out the reaction 5-[(5-phospho-1-deoxy-D-ribulos-1-ylimino)methylamino]-1-(5-phospho-beta-D-ribosyl)imidazole-4-carboxamide + L-glutamine = D-erythro-1-(imidazol-4-yl)glycerol 3-phosphate + 5-amino-1-(5-phospho-beta-D-ribosyl)imidazole-4-carboxamide + L-glutamate + H(+). The protein operates within amino-acid biosynthesis; L-histidine biosynthesis; L-histidine from 5-phospho-alpha-D-ribose 1-diphosphate: step 5/9. Functionally, IGPS catalyzes the conversion of PRFAR and glutamine to IGP, AICAR and glutamate. The HisF subunit catalyzes the cyclization activity that produces IGP and AICAR from PRFAR using the ammonia provided by the HisH subunit. In Streptomyces avermitilis (strain ATCC 31267 / DSM 46492 / JCM 5070 / NBRC 14893 / NCIMB 12804 / NRRL 8165 / MA-4680), this protein is Imidazole glycerol phosphate synthase subunit HisF.